Consider the following 152-residue polypeptide: Transcriptional regulator MraZ (152 aa).

2 consecutive SpoVT-AbrB domains span residues 5 to 52 (ASAI…PVQE) and 81 to 124 (AHEC…DEAA).

The protein belongs to the MraZ family. In terms of assembly, forms oligomers.

Its subcellular location is the cytoplasm. The protein resides in the nucleoid. The polypeptide is Transcriptional regulator MraZ (Shewanella piezotolerans (strain WP3 / JCM 13877)).